The sequence spans 406 residues: S-adenosylmethionine synthase (406 aa).

Residue histidine 17 coordinates ATP. Residue aspartate 19 coordinates Mg(2+). Glutamate 45 serves as a coordination point for K(+). Residues glutamate 58 and glutamine 101 each contribute to the L-methionine site. A flexible loop region spans residues 101 to 111 (QSAEINQGVAR). ATP-binding positions include 178-180 (DGK), aspartate 258, 264-265 (RK), alanine 281, and lysine 285. Aspartate 258 contacts L-methionine. Lysine 289 is a binding site for L-methionine.

The protein belongs to the AdoMet synthase family. Homotetramer; dimer of dimers. Requires Mg(2+) as cofactor. K(+) serves as cofactor.

It localises to the cytoplasm. The catalysed reaction is L-methionine + ATP + H2O = S-adenosyl-L-methionine + phosphate + diphosphate. It participates in amino-acid biosynthesis; S-adenosyl-L-methionine biosynthesis; S-adenosyl-L-methionine from L-methionine: step 1/1. Its function is as follows. Catalyzes the formation of S-adenosylmethionine (AdoMet) from methionine and ATP. The overall synthetic reaction is composed of two sequential steps, AdoMet formation and the subsequent tripolyphosphate hydrolysis which occurs prior to release of AdoMet from the enzyme. The protein is S-adenosylmethionine synthase of Bifidobacterium longum subsp. infantis (strain ATCC 15697 / DSM 20088 / JCM 1222 / NCTC 11817 / S12).